The chain runs to 280 residues: Bis(5'-nucleosyl)-tetraphosphatase, symmetrical (280 aa).

Belongs to the Ap4A hydrolase family.

The catalysed reaction is P(1),P(4)-bis(5'-adenosyl) tetraphosphate + H2O = 2 ADP + 2 H(+). Its function is as follows. Hydrolyzes diadenosine 5',5'''-P1,P4-tetraphosphate to yield ADP. In Shigella boydii serotype 18 (strain CDC 3083-94 / BS512), this protein is Bis(5'-nucleosyl)-tetraphosphatase, symmetrical.